Here is a 127-residue protein sequence, read N- to C-terminus: Biogenesis of lysosome-related organelles complex 1 subunit BLS1 (127 aa).

Positions 103 to 127 (KNSHNTNHGGCNKTKNSSKDKLLDK) are disordered. A compositionally biased stretch (polar residues) spans 105–117 (SHNTNHGGCNKTK).

The protein belongs to the BLOC1S1 family. As to quaternary structure, component of the biogenesis of lysosome-related organelles complex-1 (BLOC-1).

It is found in the endosome. Functionally, component of the biogenesis of lysosome-related organelles complex-1 (BLOC-1), a complex involved in endosomal cargo sorting. In Vanderwaltozyma polyspora (strain ATCC 22028 / DSM 70294 / BCRC 21397 / CBS 2163 / NBRC 10782 / NRRL Y-8283 / UCD 57-17) (Kluyveromyces polysporus), this protein is Biogenesis of lysosome-related organelles complex 1 subunit BLS1 (BLS1).